The sequence spans 387 residues: Alkanesulfonate monooxygenase (387 aa).

The segment at 365–387 (HNSGPFGETVGNDYRPSRLASQS) is disordered.

Belongs to the SsuD family.

The enzyme catalyses an alkanesulfonate + FMNH2 + O2 = an aldehyde + FMN + sulfite + H2O + 2 H(+). Catalyzes the desulfonation of aliphatic sulfonates. In Bradyrhizobium diazoefficiens (strain JCM 10833 / BCRC 13528 / IAM 13628 / NBRC 14792 / USDA 110), this protein is Alkanesulfonate monooxygenase.